A 217-amino-acid polypeptide reads, in one-letter code: Adenylate kinase (217 aa).

10–15 (GAGKGT) serves as a coordination point for ATP. The tract at residues 30–59 (STGDMLRAAVKAGTPLGLEAKKVMDSGGLV) is NMP. AMP-binding positions include T31, R36, 57 to 59 (GLV), 85 to 88 (GFPR), and Q92. Residues 122-159 (GRRVHVASGRTYHVKFNPPKVAGVDDVTGEPLIQRDDD) form an LID region. Residues R123 and 132 to 133 (TY) each bind ATP. The AMP site is built by R156 and R167. G203 provides a ligand contact to ATP.

The protein belongs to the adenylate kinase family. As to quaternary structure, monomer.

The protein localises to the cytoplasm. It catalyses the reaction AMP + ATP = 2 ADP. Its pathway is purine metabolism; AMP biosynthesis via salvage pathway; AMP from ADP: step 1/1. In terms of biological role, catalyzes the reversible transfer of the terminal phosphate group between ATP and AMP. Plays an important role in cellular energy homeostasis and in adenine nucleotide metabolism. This is Adenylate kinase from Methylibium petroleiphilum (strain ATCC BAA-1232 / LMG 22953 / PM1).